The primary structure comprises 128 residues: Fluoride-specific ion channel FluC (128 aa).

The next 4 helical transmembrane spans lie at 6-26 (LVAL…GLVL), 36-56 (LPTF…AGLA), 68-88 (VLLF…GLET), and 99-119 (IAAA…WLGF). Positions 76 and 79 each coordinate Na(+).

The protein belongs to the fluoride channel Fluc/FEX (TC 1.A.43) family.

The protein localises to the cell inner membrane. The catalysed reaction is fluoride(in) = fluoride(out). Its activity is regulated as follows. Na(+) is not transported, but it plays an essential structural role and its presence is essential for fluoride channel function. Functionally, fluoride-specific ion channel. Important for reducing fluoride concentration in the cell, thus reducing its toxicity. In Methylobacillus flagellatus (strain ATCC 51484 / DSM 6875 / VKM B-1610 / KT), this protein is Fluoride-specific ion channel FluC.